Consider the following 223-residue polypeptide: MKDLENLQKLLGYEFENTKLLNEALTHKSTKLPYSNERLEFLGDAVMDLIVGEYLFKKFSKTNEGDMSKLRAALVNEKSFANMARHLQIGEFIHLSTAEANNGGREKASLLSDAFEAVMGAVYLEAGLDKVREIAVRLLEICYPKIDFSHLVKDYKTALQEITQASLGTTPIYELVRSFGPDHKKEFEIALLLNDKEISRAIANSKKEAQQMAAKIALEKMKK.

An RNase III domain is found at 4 to 127 (LENLQKLLGY…VMGAVYLEAG (124 aa)). E40 is a Mg(2+) binding site. Residue D44 is part of the active site. Mg(2+) contacts are provided by D113 and E116. E116 is a catalytic residue. In terms of domain architecture, DRBM spans 154-223 (DYKTALQEIT…AKIALEKMKK (70 aa)).

Belongs to the ribonuclease III family. Homodimer. Requires Mg(2+) as cofactor.

The protein localises to the cytoplasm. It carries out the reaction Endonucleolytic cleavage to 5'-phosphomonoester.. Its function is as follows. Digests double-stranded RNA. Involved in the processing of primary rRNA transcript to yield the immediate precursors to the large and small rRNAs (23S and 16S). Processes some mRNAs, and tRNAs when they are encoded in the rRNA operon. Processes pre-crRNA and tracrRNA of type II CRISPR loci if present in the organism. This Campylobacter curvus (strain 525.92) protein is Ribonuclease 3.